We begin with the raw amino-acid sequence, 826 residues long: MELNRRDFMKANAAIAAAAAAGITIPVKNVQAADDGIRWDKAPCRYCGTGCSVLVGTKDGRVVATQGDPDAEVNRGLNCIKGYFLSKIMYGADRVQQPLLRMKDGKFDKEGDFTPISWEQAFTIMAEKIKDILKKKEPNAIGMFSSGQTTIYEGYAKVKLWKAGLRSNTIDPNARHCMASAAVAFMRTFGMDEPMGCYNDIEKADTFVLWGSNMAEMHPILWSRISDRRLSGDNVKVVVMSTYEHRSFELADTPIIFKPQSDLAILNYIANYIIQNDKVDWDFVNKHTKFKRGETNIGYGLRPEHPLQQGTNAKTAGKMYDSDFEEFKKIVSEYTLDKAHEISGVPKDQLETLAKMYADPEQNLVSYWTMGFNQHTRGVWVNQMMYNVHLLTGKISKPGCGPFSLTGQPSACGTAREVGTFIHRLPADMVVTNPKHVAKAEEIWQLPAGTIPTVPGFHAVAQSRALKDGKLNFLWQMCTNNMQGGPNINEETFPGWRNPENFIVVSDPYPSTSAVAADLILPTCMWVEKEGGYGNAERRTQLWRQQVKGPGESRSDLWQIVEFSKYFKTDEVWSEELLAQKPEYRGKTLYEVLYKNGEVDKFQVPTNIPGYINDEADHFGFYLQKGLFEEYASFGRGHGHDLAPFDVYHQVRGLRWPVVDGKETLWRYREGYDPYVKSGEEVAFYGNPDNKAIILGVPYEAPAESPDEEYDLWLCTGRVLEHWHTGTMTRRVPELHKAFPNNLVWMHPTDAKKRGLRHGDKVKLITRRGEMISHLDTRGRNKTPEGLIFTTFFDAGQLTNKLTLDATDPISFETDYKKCAVKVVKA.

Residues 1–32 constitute a signal peptide (tat-type signal); the sequence is MELNRRDFMKANAAIAAAAAAGITIPVKNVQA. Positions 37 to 93 constitute a 4Fe-4S Mo/W bis-MGD-type domain; the sequence is IRWDKAPCRYCGTGCSVLVGTKDGRVVATQGDPDAEVNRGLNCIKGYFLSKIMYGAD. The [4Fe-4S] cluster site is built by Cys44, Cys47, Cys51, and Cys79. Mo-bis(molybdopterin guanine dinucleotide) is bound by residues Lys81, Gln148, Asn173, Cys177, 210–217, 241–245, 260–262, Met370, Gln374, Asn480, 506–507, Lys529, Asp556, and 716–725; these read WGSNMAEM, STYEH, QSD, SD, and TGRVLEHWHT. Phe792 lines the substrate pocket. 2 residues coordinate Mo-bis(molybdopterin guanine dinucleotide): Asn800 and Lys817.

It belongs to the prokaryotic molybdopterin-containing oxidoreductase family. NasA/NapA/NarB subfamily. Component of the periplasmic nitrate reductase NapAB complex composed of NapA and NapB. [4Fe-4S] cluster serves as cofactor. Mo-bis(molybdopterin guanine dinucleotide) is required as a cofactor. In terms of processing, predicted to be exported by the Tat system. The position of the signal peptide cleavage has not been experimentally proven.

It is found in the periplasm. The catalysed reaction is 2 Fe(II)-[cytochrome] + nitrate + 2 H(+) = 2 Fe(III)-[cytochrome] + nitrite + H2O. Its function is as follows. Catalytic subunit of the periplasmic nitrate reductase complex NapAB. Receives electrons from NapB and catalyzes the reduction of nitrate to nitrite. The polypeptide is Periplasmic nitrate reductase (Actinobacillus succinogenes (strain ATCC 55618 / DSM 22257 / CCUG 43843 / 130Z)).